A 571-amino-acid chain; its full sequence is Septation ring formation regulator EzrA (571 aa).

The Extracellular portion of the chain corresponds to 1 to 3 (MYY). A helical transmembrane segment spans residues 4–22 (MLIGFIIVVIAVIGAGYIL). The Cytoplasmic segment spans residues 23-571 (KRKHYQRINE…ESKVSVDDIE (549 aa)). 4 coiled-coil regions span residues 248–298 (LAQM…DTLE), 326–374 (DALA…ASGE), 400–437 (KFAEELRSLRKDELEARDDAERMRRAIITLDRKMERER), and 478–529 (RIAE…ENHF).

The protein belongs to the EzrA family.

The protein localises to the cell membrane. In terms of biological role, negative regulator of FtsZ ring formation; modulates the frequency and position of FtsZ ring formation. Inhibits FtsZ ring formation at polar sites. Interacts either with FtsZ or with one of its binding partners to promote depolymerization. In Listeria monocytogenes serotype 4b (strain CLIP80459), this protein is Septation ring formation regulator EzrA.